The sequence spans 357 residues: Peptide chain release factor 1 (357 aa).

Residue Gln234 is modified to N5-methylglutamine.

The protein belongs to the prokaryotic/mitochondrial release factor family. Post-translationally, methylated by PrmC. Methylation increases the termination efficiency of RF1.

The protein localises to the cytoplasm. Peptide chain release factor 1 directs the termination of translation in response to the peptide chain termination codons UAG and UAA. This Lactococcus lactis subsp. lactis (strain IL1403) (Streptococcus lactis) protein is Peptide chain release factor 1 (prfA).